The primary structure comprises 310 residues: N-acetyl-gamma-glutamyl-phosphate reductase (310 aa).

The active site involves cysteine 117.

It belongs to the NAGSA dehydrogenase family. Type 2 subfamily.

The protein localises to the cytoplasm. It carries out the reaction N-acetyl-L-glutamate 5-semialdehyde + phosphate + NADP(+) = N-acetyl-L-glutamyl 5-phosphate + NADPH + H(+). It participates in amino-acid biosynthesis; L-arginine biosynthesis; N(2)-acetyl-L-ornithine from L-glutamate: step 3/4. Functionally, catalyzes the NADPH-dependent reduction of N-acetyl-5-glutamyl phosphate to yield N-acetyl-L-glutamate 5-semialdehyde. This Brucella melitensis biotype 1 (strain ATCC 23456 / CCUG 17765 / NCTC 10094 / 16M) protein is N-acetyl-gamma-glutamyl-phosphate reductase.